The primary structure comprises 210 residues: UPF0502 protein Sama_1967 (210 aa).

The protein belongs to the UPF0502 family.

The polypeptide is UPF0502 protein Sama_1967 (Shewanella amazonensis (strain ATCC BAA-1098 / SB2B)).